The sequence spans 235 residues: Large ribosomal subunit protein uL1 (235 aa).

Belongs to the universal ribosomal protein uL1 family. In terms of assembly, part of the 50S ribosomal subunit.

In terms of biological role, binds directly to 23S rRNA. The L1 stalk is quite mobile in the ribosome, and is involved in E site tRNA release. Functionally, protein L1 is also a translational repressor protein, it controls the translation of the L11 operon by binding to its mRNA. The protein is Large ribosomal subunit protein uL1 of Desulfotalea psychrophila (strain LSv54 / DSM 12343).